Reading from the N-terminus, the 293-residue chain is 4-diphosphocytidyl-2-C-methyl-D-erythritol kinase (293 aa).

Residue K16 is part of the active site. Residue 99–109 (PMGAGLGGGSS) coordinates ATP. D141 is an active-site residue.

Belongs to the GHMP kinase family. IspE subfamily.

It carries out the reaction 4-CDP-2-C-methyl-D-erythritol + ATP = 4-CDP-2-C-methyl-D-erythritol 2-phosphate + ADP + H(+). The protein operates within isoprenoid biosynthesis; isopentenyl diphosphate biosynthesis via DXP pathway; isopentenyl diphosphate from 1-deoxy-D-xylulose 5-phosphate: step 3/6. Its function is as follows. Catalyzes the phosphorylation of the position 2 hydroxy group of 4-diphosphocytidyl-2C-methyl-D-erythritol. The sequence is that of 4-diphosphocytidyl-2-C-methyl-D-erythritol kinase from Burkholderia thailandensis (strain ATCC 700388 / DSM 13276 / CCUG 48851 / CIP 106301 / E264).